A 79-amino-acid chain; its full sequence is Reactive oxygen species modulator 1 (79 aa).

A helical transmembrane segment spans residues 23–43 (FMMGFAVGMAAGALFGTFSCL). The segment at 42–60 (CLRFGMRGRELMGGVGKTM) is sufficient for antibacterial activity.

Belongs to the MGR2 family.

The protein localises to the mitochondrion inner membrane. Has antibacterial activity against a variety of bacteria including S.aureus, P.aeruginosa and M.tuberculosis. Acts by inducing bacterial membrane breakage. In terms of biological role, induces production of reactive oxygen species (ROS) which are necessary for cell proliferation. May play a role in inducing oxidative DNA damage and replicative senescence. May play a role in the coordination of mitochondrial morphology and cell proliferation. In Xenopus tropicalis (Western clawed frog), this protein is Reactive oxygen species modulator 1 (romo1).